We begin with the raw amino-acid sequence, 188 residues long: Elongation factor P (188 aa).

The protein belongs to the elongation factor P family.

The protein localises to the cytoplasm. The protein operates within protein biosynthesis; polypeptide chain elongation. In terms of biological role, involved in peptide bond synthesis. Stimulates efficient translation and peptide-bond synthesis on native or reconstituted 70S ribosomes in vitro. Probably functions indirectly by altering the affinity of the ribosome for aminoacyl-tRNA, thus increasing their reactivity as acceptors for peptidyl transferase. This chain is Elongation factor P, found in Gemmatimonas aurantiaca (strain DSM 14586 / JCM 11422 / NBRC 100505 / T-27).